Reading from the N-terminus, the 245-residue chain is Orotidine 5'-phosphate decarboxylase (245 aa).

Residues aspartate 22, lysine 44, 71–80 (DLKFHDIPNT), threonine 131, arginine 192, glutamine 201, glycine 221, and arginine 222 contribute to the substrate site. The active-site Proton donor is lysine 73.

This sequence belongs to the OMP decarboxylase family. Type 1 subfamily. As to quaternary structure, homodimer.

The enzyme catalyses orotidine 5'-phosphate + H(+) = UMP + CO2. It functions in the pathway pyrimidine metabolism; UMP biosynthesis via de novo pathway; UMP from orotate: step 2/2. Functionally, catalyzes the decarboxylation of orotidine 5'-monophosphate (OMP) to uridine 5'-monophosphate (UMP). The protein is Orotidine 5'-phosphate decarboxylase of Shigella flexneri.